The primary structure comprises 299 residues: Tyrosine recombinase XerC (299 aa).

Residues 2–88 (SALQPLIDTY…ALRSFLDYLV (87 aa)) enclose the Core-binding (CB) domain. The Tyr recombinase domain maps to 109 to 289 (PLPKNVSVDD…DFQHLSKIYD (181 aa)). Residues Arg-148, Lys-172, His-241, Arg-244, and His-267 contribute to the active site. Tyr-276 functions as the O-(3'-phospho-DNA)-tyrosine intermediate in the catalytic mechanism.

The protein belongs to the 'phage' integrase family. XerC subfamily. In terms of assembly, forms a cyclic heterotetrameric complex composed of two molecules of XerC and two molecules of XerD.

It localises to the cytoplasm. Functionally, site-specific tyrosine recombinase, which acts by catalyzing the cutting and rejoining of the recombining DNA molecules. The XerC-XerD complex is essential to convert dimers of the bacterial chromosome into monomers to permit their segregation at cell division. It also contributes to the segregational stability of plasmids. The protein is Tyrosine recombinase XerC of Psychromonas ingrahamii (strain DSM 17664 / CCUG 51855 / 37).